A 480-amino-acid polypeptide reads, in one-letter code: Phenolic acid decarboxylase (480 aa).

Mn(2+) contacts are provided by asparagine 163, histidine 185, and glutamate 227. Residues 163–168 (NVGTYR) and 184–185 (MH) each bind prenylated FMN. Glutamate 278 functions as the Proton donor in the catalytic mechanism. The segment at 443–466 (TTPVPPEPNPRETQLLDPPDGTEE) is disordered.

It belongs to the UbiD family. YclC subfamily. In terms of assembly, homohexamer. Prenylated FMN serves as cofactor. It depends on Mn(2+) as a cofactor.

The enzyme catalyses 4-hydroxybenzoate + H(+) = phenol + CO2. It carries out the reaction 3,4-dihydroxybenzoate + H(+) = catechol + CO2. With respect to regulation, inhibited by Zn(2+), (2,3,4)-trihydroxybenzoate and (3,4,5)-trihydroxybenzoate. Ammonium and rubidium ions decrease the activity of the carboxylation of 3,4-dihydroxybenzoate by about 20%. Functionally, involved in the non-oxidative decarboxylation and detoxification of phenolic derivatives under anaerobic conditions. Oxygen-sensitive phenolic acid decarboxylase that catalyzes the reversible decarboxylation of 4-hydroxybenzoate and 3,4-dihydroxybenzoate. The chain is Phenolic acid decarboxylase from Sedimentibacter hydroxybenzoicus (Clostridium hydroxybenzoicum).